Consider the following 181-residue polypeptide: S-fimbrial protein subunit SfaA (181 aa).

The first 24 residues, 1 to 24 (MKLKFISMAVFSALTLGVATNASA), serve as a signal peptide directing secretion. A disulfide bridge connects residues cysteine 44 and cysteine 84.

This sequence belongs to the fimbrial protein family.

The protein resides in the fimbrium. Its function is as follows. Fimbriae (also called pili), polar filaments radiating from the surface of the bacterium to a length of 0.5-1.5 micrometers and numbering 100-300 per cell, enable bacteria to colonize the epithelium of specific host organs. The major fimbrial subunit. Interacts with alpha-sialic acid-(2-3)-beta-Gal containing receptors. It belongs to the group of Mrh (Mannose-resistant hemagglutination) fimbrial proteins. This chain is S-fimbrial protein subunit SfaA (sfaA), found in Escherichia coli O6:K15:H31 (strain 536 / UPEC).